We begin with the raw amino-acid sequence, 503 residues long: MEVAAGAPRSRLLLFVLAATATLAPEATAFQCFCHLCTKDNFTCVTDGLCFVSVTETTDKVIHNSMCIAEIDLIPRDRPFVCAPSSKTGSVTTTYCCNQDHCNKIELPTVGPFPGKPPSGLGPVELAAVIAGPVCFVCISLMLMVYICHNRTVIHHRVPNEEDPSLDRPFISEGTTLKDLIYDMTTSGSGSGLPLLVQRTIARTIVLQESIGKGRFGEVWRGKWRGEEVAVKIFSSREERSWFREAEIYQTVMLRHENILGFIAADNKDNGTWTQLWLVSDYHEHGSLFDYLNRYTVTVEGMIKLALSTASGLAHLHMEIVGTQGKPAIAHRDLKSKNILVKKNGTCCIADLGLAVRHDSATDTIDIAPNHRVGTKRYMAPEVLDDSINMKHFESFKRADIYAMGLVFWEIARRCSIGGIHEDYQLPYYDLVPSDPSVEEMRKVVCEQKLRPNIPNRWQSCEALRVMAKIMRECWYANGAARLTALRIKKTLSQLSQQEGIKM.

The first 29 residues, 1-29 (MEVAAGAPRSRLLLFVLAATATLAPEATA), serve as a signal peptide directing secretion. Residues 30-126 (FQCFCHLCTK…PPSGLGPVEL (97 aa)) are Extracellular-facing. 5 disulfides stabilise this stretch: Cys-32–Cys-50, Cys-34–Cys-37, Cys-44–Cys-67, Cys-82–Cys-96, and Cys-97–Cys-102. Residue Asn-41 is glycosylated (N-linked (GlcNAc...) asparagine). The helical transmembrane segment at 127 to 147 (AAVIAGPVCFVCISLMLMVYI) threads the bilayer. Over 148–503 (CHNRTVIHHR…QLSQQEGIKM (356 aa)) the chain is Cytoplasmic. Position 165 is a phosphoserine (Ser-165). Residues 175–204 (TTLKDLIYDMTTSGSGSGLPLLVQRTIART) form the GS domain. Phosphothreonine; by TGFBR2 is present on residues Thr-185 and Thr-186. Ser-187, Ser-189, and Ser-191 each carry phosphoserine; by TGFBR2. The FKBP1A-binding signature appears at 193–194 (LP). Positions 205–495 (IVLQESIGKG…LRIKKTLSQL (291 aa)) constitute a Protein kinase domain. ATP contacts are provided by residues 211 to 219 (IGKGRFGEV) and Lys-232. The Proton acceptor role is filled by Asp-333. A Glycyl lysine isopeptide (Lys-Gly) (interchain with G-Cter in SUMO) cross-link involves residue Lys-391.

The protein belongs to the protein kinase superfamily. TKL Ser/Thr protein kinase family. TGFB receptor subfamily. In terms of assembly, homodimer; in the endoplasmic reticulum but also at the cell membrane. Heterohexamer; TGFB1, TGFB2 and TGFB3 homodimeric ligands assemble a functional receptor composed of two TGFBR1 and TGFBR2 heterodimers to form a ligand-receptor heterohexamer. The respective affinity of TGBRB1 and TGFBR2 for the ligands may modulate the kinetics of assembly of the receptor and may explain the different biological activities of TGFB1, TGFB2 and TGFB3. Component of a complex composed of TSC22D1 (via N-terminus), TGFBR1 and TGFBR2; the interaction between TSC22D1 and TGFBR1 is inhibited by SMAD7 and promoted by TGFB1. Interacts with CD109; inhibits TGF-beta receptor activation in keratinocytes. Interacts with RBPMS. Interacts (unphosphorylated) with FKBP1A; prevents TGFBR1 phosphorylation by TGFBR2 and stabilizes it in the inactive conformation. Interacts with SMAD2, SMAD3 and ZFYVE9; ZFYVE9 recruits SMAD2 and SMAD3 to the TGF-beta receptor. Interacts with TRAF6 and MAP3K7; induces MAP3K7 activation by TRAF6. Interacts with PARD6A; involved in TGF-beta induced epithelial to mesenchymal transition. Interacts with NEDD4L. Interacts with SMAD7, SMURF1 and SMURF2; SMAD7 recruits NEDD4L, SMURF1 and SMURF2 to the TGF-beta receptor. Interacts with USP15 and VPS39. Interacts with SDCBP (via C-terminus). Interacts with CAV1 and this interaction is impaired in the presence of SDCBP. Interacts with APPL1; interaction is TGF beta dependent; mediates trafficking of the TGFBR1 from the endosomes to the nucleus via microtubules in a TRAF6-dependent manner. Interacts with GPR50; this interaction promotes the constitutive activation of SMAD signaling pathway. The cofactor is Mg(2+). It depends on Mn(2+) as a cofactor. In terms of processing, phosphorylated at basal levels in the absence of ligand. Activated upon phosphorylation by TGFBR2, mainly in the GS domain. Phosphorylation in the GS domain abrogates FKBP1A-binding. N-Glycosylated. Post-translationally, ubiquitinated; undergoes ubiquitination catalyzed by several E3 ubiquitin ligases including SMURF1, SMURF2 and NEDD4L2. Results in the proteasomal and/or lysosomal degradation of the receptor thereby negatively regulating its activity. Deubiquitinated by USP15, leading to stabilization of the protein and enhanced TGF-beta signal. Its ubiquitination and proteasome-mediated degradation is negatively regulated by SDCBP.

Its subcellular location is the cell membrane. It localises to the cell junction. The protein localises to the tight junction. The protein resides in the membrane raft. It is found in the cell surface. It carries out the reaction L-threonyl-[receptor-protein] + ATP = O-phospho-L-threonyl-[receptor-protein] + ADP + H(+). The enzyme catalyses L-seryl-[receptor-protein] + ATP = O-phospho-L-seryl-[receptor-protein] + ADP + H(+). Kept in an inactive conformation by FKBP1A preventing receptor activation in absence of ligand. CD109 is another inhibitor of the receptor. Its function is as follows. Transmembrane serine/threonine kinase forming with the TGF-beta type II serine/threonine kinase receptor, TGFBR2, the non-promiscuous receptor for the TGF-beta cytokines TGFB1, TGFB2 and TGFB3. Transduces the TGFB1, TGFB2 and TGFB3 signal from the cell surface to the cytoplasm and is thus regulating a plethora of physiological and pathological processes including cell cycle arrest in epithelial and hematopoietic cells, control of mesenchymal cell proliferation and differentiation, wound healing, extracellular matrix production, immunosuppression and carcinogenesis. The formation of the receptor complex composed of 2 TGFBR1 and 2 TGFBR2 molecules symmetrically bound to the cytokine dimer results in the phosphorylation and the activation of TGFBR1 by the constitutively active TGFBR2. Activated TGFBR1 phosphorylates SMAD2 which dissociates from the receptor and interacts with SMAD4. The SMAD2-SMAD4 complex is subsequently translocated to the nucleus where it modulates the transcription of the TGF-beta-regulated genes. This constitutes the canonical SMAD-dependent TGF-beta signaling cascade. Also involved in non-canonical, SMAD-independent TGF-beta signaling pathways. For instance, TGFBR1 induces TRAF6 autoubiquitination which in turn results in MAP3K7 ubiquitination and activation to trigger apoptosis. Also regulates epithelial to mesenchymal transition through a SMAD-independent signaling pathway through PARD6A phosphorylation and activation. The protein is TGF-beta receptor type-1 (TGFBR1) of Sus scrofa (Pig).